Here is a 405-residue protein sequence, read N- to C-terminus: MANIVVKRLERTPIDEIPVEIVERKGIGHPDSICDGIAESVSVALCKMYKEKMGVVLHHNTDQVELVGGYAYLELGGGCMVSPIYILLSGRATMEVLDKETGKIIKLPVNTTAVNAARDYLKKALRNMDLEKDVVVDCRIGQGSVDLVEVFDRKRTEIPHANDTSFGVGHAPLSTTEKIVLETEKLLNSDALKAEIPAVGEDIKVMGLREGKKITLTIAMAAVDKYVNSCADYVNVKELAKAKVEENAKKYLDGHELEVCINTADDDEDCIFLTVTGTSAEMGDDGSVGRGNRANGLITPFRPMSMEATSGKNPITHIGKIYNILSNIIAEDVAKIEGVRECQIRILSQIGKPVTEPKILDIEMIPENGFELEELSPKAKEVAQKWLDNISEVTERIVSGNVTTF.

141–146 (GQGSVD) is an ATP binding site.

The protein belongs to the AdoMet synthase 2 family. Requires Mg(2+) as cofactor.

The enzyme catalyses L-methionine + ATP + H2O = S-adenosyl-L-methionine + phosphate + diphosphate. The protein operates within amino-acid biosynthesis; S-adenosyl-L-methionine biosynthesis; S-adenosyl-L-methionine from L-methionine: step 1/1. In terms of biological role, catalyzes the formation of S-adenosylmethionine from methionine and ATP. This Methanococcus maripaludis (Methanococcus deltae) protein is S-adenosylmethionine synthase.